The sequence spans 133 residues: Small ribosomal subunit protein uS11 (133 aa).

It belongs to the universal ribosomal protein uS11 family. In terms of assembly, part of the 30S ribosomal subunit. Interacts with proteins S7 and S18. Binds to IF-3.

In terms of biological role, located on the platform of the 30S subunit, it bridges several disparate RNA helices of the 16S rRNA. Forms part of the Shine-Dalgarno cleft in the 70S ribosome. In Ralstonia pickettii (strain 12J), this protein is Small ribosomal subunit protein uS11.